We begin with the raw amino-acid sequence, 145 residues long: Neuromedin-S (145 aa).

An N-terminal signal peptide occupies residues 1–25 (MKYLAQFPSILAIYCFCLLQIPSSG). 3 propeptides span residues 26-64 (FPRP…IYKR), 65-100 (FLFH…ADRR), and 101-103 (MKT). Asparagine amide is present on asparagine 136. A propeptide spanning residues 139 to 145 (NLDFDTW) is cleaved from the precursor.

The protein belongs to the NmU family.

It localises to the secreted. Functionally, implicated in the regulation of circadian rhythms through autocrine and/or paracrine actions. The polypeptide is Neuromedin-S (NMS) (Bos taurus (Bovine)).